Reading from the N-terminus, the 581-residue chain is Chaotic nuclear migration protein 67 (581 aa).

A phosphoserine mark is found at serine 17, serine 20, serine 72, serine 85, and serine 89. Residues 86–150 form a disordered region; the sequence is YQESPGLQER…PTDEHTSPDI (65 aa). Residues 94–114 are compositionally biased toward basic and acidic residues; it reads ERPKNEKDKSPIGTDVHKKDV. Serine 151 bears the Phosphoserine mark. Coiled coils occupy residues 179-252, 306-363, and 373-451; these read LGYQ…DTIQ, FLCA…LSKQ, and KLTI…NTSE.

Interacts directly with ADY3 and YOR129C. Interacts with ADY4. Probable component of a SPB complex composed of ADY3, SSP1, DON1, MPC54, SPO21/MPC70, NUD1 and CNM67. Post-translationally, phosphorylated in its N-terminal part.

Its subcellular location is the cytoplasm. The protein resides in the cytoskeleton. It is found in the microtubule organizing center. The protein localises to the spindle pole body. In terms of biological role, involved in the pathway that organizes the shaping and sizing of the prospore membrane (PSM) during sporulation. Required for the proper formation of the spindle pole body (SPB) outer plaque. May connect the outer plaque to the central plaque embedded in the nuclear envelope. This is Chaotic nuclear migration protein 67 (CNM67) from Saccharomyces cerevisiae (strain ATCC 204508 / S288c) (Baker's yeast).